The primary structure comprises 687 residues: Amine oxidase [copper-containing] gamma 2 (687 aa).

An N-terminal signal peptide occupies residues Met1–Ala24. Asn154 carries N-linked (GlcNAc...) asparagine glycosylation. Cys169 and Cys191 form a disulfide bridge. Asn244 is a glycosylation site (N-linked (GlcNAc...) asparagine). Tyr333–Ser344 is a binding site for substrate. The Proton acceptor role is filled by Asp335. An intrachain disulfide couples Cys354 to Cys380. Val420–Tyr425 provides a ligand contact to substrate. Tyr423 serves as the catalytic Schiff-base intermediate with substrate; via topaquinone. Tyr423 is modified (2',4',5'-topaquinone). Positions 480 and 482 each coordinate Cu cation. Residues Asp489, Met490, and Asp491 each coordinate Mn(2+). Residues Asn497 and Asn598 are each glycosylated (N-linked (GlcNAc...) asparagine). Mn(2+) contacts are provided by Asp632 and Ile633. His643 is a binding site for Cu cation.

It belongs to the copper/topaquinone oxidase family. In terms of assembly, homodimer. Requires Cu cation as cofactor. The cofactor is Zn(2+). L-topaquinone is required as a cofactor. Mn(2+) serves as cofactor. In terms of processing, topaquinone (TPQ) is generated by copper-dependent autoxidation of a specific tyrosyl residue. As to expression, expressed in roots, leaves and cotyledons.

The protein resides in the secreted. It localises to the extracellular space. Its subcellular location is the apoplast. It carries out the reaction a primary methyl amine + O2 + H2O = an aldehyde + H2O2 + NH4(+). The protein operates within amine and polyamine degradation; putrescine degradation. Functionally, copper amine oxidase that can use putrescine and spermidine as substrates. This Arabidopsis thaliana (Mouse-ear cress) protein is Amine oxidase [copper-containing] gamma 2.